The chain runs to 161 residues: Phosphopantetheine adenylyltransferase (161 aa).

Belongs to the eukaryotic CoaD family.

The protein resides in the cytoplasm. The enzyme catalyses (R)-4'-phosphopantetheine + ATP + H(+) = 3'-dephospho-CoA + diphosphate. The protein operates within cofactor biosynthesis; coenzyme A biosynthesis. Its function is as follows. Reversibly transfers an adenylyl group from ATP to 4'-phosphopantetheine, yielding dephospho-CoA (dPCoA) and pyrophosphate. This chain is Phosphopantetheine adenylyltransferase, found in Methanosarcina barkeri (strain Fusaro / DSM 804).